Here is a 308-residue protein sequence, read N- to C-terminus: Pantothenate synthetase (308 aa).

39–46 (MGALHDGH) lines the ATP pocket. Catalysis depends on His46, which acts as the Proton donor. Gln71 contacts (R)-pantoate. Gln71 lines the beta-alanine pocket. 157 to 160 (GEKD) contributes to the ATP binding site. Gln163 contacts (R)-pantoate. Residues Val186 and 194-197 (MSSR) each bind ATP. The disordered stretch occupies residues 286 to 308 (IETPAGTAGPDGDRQYAQSPWRN).

Belongs to the pantothenate synthetase family. In terms of assembly, homodimer.

It localises to the cytoplasm. The enzyme catalyses (R)-pantoate + beta-alanine + ATP = (R)-pantothenate + AMP + diphosphate + H(+). It participates in cofactor biosynthesis; (R)-pantothenate biosynthesis; (R)-pantothenate from (R)-pantoate and beta-alanine: step 1/1. Its function is as follows. Catalyzes the condensation of pantoate with beta-alanine in an ATP-dependent reaction via a pantoyl-adenylate intermediate. This chain is Pantothenate synthetase, found in Mycolicibacterium paratuberculosis (strain ATCC BAA-968 / K-10) (Mycobacterium paratuberculosis).